Reading from the N-terminus, the 311-residue chain is Porphobilinogen deaminase (311 aa).

The residue at position 245 (C245) is an S-(dipyrrolylmethanemethyl)cysteine.

The protein belongs to the HMBS family. In terms of assembly, monomer. The cofactor is dipyrromethane.

It carries out the reaction 4 porphobilinogen + H2O = hydroxymethylbilane + 4 NH4(+). The protein operates within porphyrin-containing compound metabolism; protoporphyrin-IX biosynthesis; coproporphyrinogen-III from 5-aminolevulinate: step 2/4. Its function is as follows. Tetrapolymerization of the monopyrrole PBG into the hydroxymethylbilane pre-uroporphyrinogen in several discrete steps. This is Porphobilinogen deaminase from Deinococcus deserti (strain DSM 17065 / CIP 109153 / LMG 22923 / VCD115).